We begin with the raw amino-acid sequence, 563 residues long: Ribulokinase (563 aa).

It belongs to the ribulokinase family.

It catalyses the reaction D-ribulose + ATP = D-ribulose 5-phosphate + ADP + H(+). The catalysed reaction is L-ribulose + ATP = L-ribulose 5-phosphate + ADP + H(+). It functions in the pathway carbohydrate degradation; L-arabinose degradation via L-ribulose; D-xylulose 5-phosphate from L-arabinose (bacterial route): step 2/3. The polypeptide is Ribulokinase (Mycolicibacterium smegmatis (Mycobacterium smegmatis)).